A 100-amino-acid polypeptide reads, in one-letter code: Large ribosomal subunit protein uL23 (100 aa).

Belongs to the universal ribosomal protein uL23 family. As to quaternary structure, part of the 50S ribosomal subunit. Contacts protein L29, and trigger factor when it is bound to the ribosome.

Functionally, one of the early assembly proteins it binds 23S rRNA. One of the proteins that surrounds the polypeptide exit tunnel on the outside of the ribosome. Forms the main docking site for trigger factor binding to the ribosome. The chain is Large ribosomal subunit protein uL23 from Vibrio vulnificus (strain CMCP6).